A 1706-amino-acid chain; its full sequence is MQQSHQAGYANAADRESGIPAAVLDGIKAVAKEKNATLMFRLVNPHSTSLIAEGVATKGLGVHAKSSDWGLQAGYIPVNPNLSKLFGRAPEVIARADNDVNSSLAHGHTAVDLTLSKERLDYLRQAGLVTGMADGVVASNHAGYEQFEFRVKETSDGRYAVQYRRKGGDDFEAVKVIGNAAGIPLTADIDMFAIMPHLSNFRDSARSSVTSGDSVTDYLARTRRAASEATGGLDRERIDLLWKIARAGARSAVGTEARRQFRYDGDMNIGVITDFELEVRNALNRRAHAVGAQDVVQHGTEQNNPFPEADEKIFVVSATGESQMLTRGQLKEYIGQQRGEGYVFYENRAYGVAGKSLFDDGLGAAPGVPGGRSKSSPDVLETVPASPGLRRPSLGAVERQDSGYDSLDGVGSRSFSLGEVSDMAAVEAAELEMTRQVLHAGARQDDAEPGVSGASAHWGQRALQGAQAVAAAQRLVHAIALMTQFGRAGSTNTPQEAASLSAAVFGLGEASSAVAETVSGFFRGSSRWAGGFGVAGGAMALGGGIAAAVGAGMSLTDDAPAGQKAAAGAEIALQLTGGTVELASSIALALAAARGVTSGLQVAGASAGAAAGALAAALSPMEIYGLVQQSHYADQLDKLAQESSAYGYEGDALLAQLYRDKTAAEGAVAGVSAVLSTVGAAVSIAAAASVVGAPVAVVTSLLTGALNGILRGVQQPIIEKLANDYARKIDELGGPQAYFEKNLQARHEQLANSDGLRKMLADLQAGWNASSVIGVQTTEISKSALELAAITGNADNLKSADVFVDRFIQGERVAGQPVVLDVAAGGIDIASRKGERPALTFITPLAAPGEEQRRRTKTGKSEFTTFVEIVGKQDRWRIRDGAADTTIDLAKVVSQLVDANGVLKHSIKLEVIGGDGDDVVLANASRIHYDGGAGTNTVSYAALGRQDSITVSADGERFNVRKQLNNANVYREGVATQKTAYGKRTENVQYRHVELARVGQLVEVDTLEHVQHIIGGAGNDSITGNAHDNFLAGGAGDDRLDGGAGNDTLVGGEGHNTVVGGAGDDVFLQDLGVWSNQLDGGAGVDTVKYNVHQPSEERLERMGDTGIHADLQKGTVEKWPALNLFSVDHVKNIENLHGSSLNDSIAGDDRDNELWGDDGNDTIHGRGGDDILRGGLGLDTLYGEDGNDIFLQDDETVSDDIDGGAGLDTVDYSAMIHAGKIVAPHEYGFGIEADLSEGWVRKAARRGMDYYDSVRSVENVIGTSMKDVLIGDAQANTLMGQGGDDTVRGGDGDDLLFGGDGNDMLYGDAGNDTLYGGLGDDTLEGGAGNDWFGQTPAREHDVLRGGAGVDTVDYSQAGAHAGVATGRIGLGILADLGAGRVDKLGEAGSSAYDTVSGIENVVGTELADRITGDAQANVLRGAGGADVLAGGEGDDVLLGGDGDDQLSGDAGRDRLYGEAGDDWFFQDAANAGNLLDGGDGNDTVDFSGPGRGLDAGAKGVFLSLGKGFASLMDEPETSNVLRHIENAVGSVRDDVLIGDAGANVLNGLAGNDVLSGGAGDDVLLGDEGSDLLSGDAGNDDLFGGQGDDTYLFGAGYGHDTIYESGGGHDTIRINAGADQLWFARQGNDLEIRILGTDDALTVHDWYRDADHRVEAIHAANQAIDPAGIEKLVEAMAQYPDPGAAAAAPPAARVPDTLMQSLAVNWR.

Residues 1-399 form an a, catalytic region; it reads MQQSHQAGYA…RRPSLGAVER (399 aa). Position 349–356 (349–356) interacts with ATP; the sequence is AYGVAGKS. Positions 367 to 405 are disordered; that stretch reads GVPGGRSKSSPDVLETVPASPGLRRPSLGAVERQDSGYD. The segment at 400–912 is b, Ala/Gly-rich; it reads QDSGYDSLDG…LKHSIKLEVI (513 aa). The segment at 500 to 698 is required for interaction with CyaC; sequence LSAAVFGLGE…SVVGAPVAVV (199 aa). 2 N6-palmitoyl lysine lipidation sites follow: K860 and K983. Residues 913-1656 are c; sequence GGDGDDVVLA…RDADHRVEAI (744 aa). Hemolysin-type calcium-binding repeat units follow at residues 1014–1031, 1032–1049, 1050–1067, 1155–1172, 1173–1190, 1279–1296, 1297–1314, 1315–1332, 1335–1352, 1411–1428, 1429–1446, 1447–1464, 1468–1484, 1537–1554, 1555–1572, 1573–1590, and 1603–1620; these read IGGA…DNFL, AGGA…NDTL, VGGE…DDVF, WGDD…DDIL, RGGL…NDIF, MGQG…DDLL, FGGD…NDTL, YGGL…NDWF, TPAR…VDTV, TGDA…ADVL, AGGE…DDQL, SGDA…DDWF, AANA…NDTV, IGDA…NDVL, SGGA…SDLL, SGDA…DDTY, and ESGG…ADQL. The d, Asp/Gly-rich stretch occupies residues 1657 to 1706; sequence HAANQAIDPAGIEKLVEAMAQYPDPGAAAAAPPAARVPDTLMQSLAVNWR.

This sequence in the N-terminal section; belongs to the adenylyl cyclase class-2 family. It in the C-terminal section; belongs to the RTX prokaryotic toxin family. Post-translationally, released in a processed form. Palmitoylated at Lys-860 and Lys-983 by CyaC. The toxin only becomes active when modified in position Lys-983: palmitoylation is required for efficient membrane insertion and pore formation of the acylated Hemolysin chain.

The protein localises to the secreted. Its subcellular location is the host cell membrane. The enzyme catalyses ATP = 3',5'-cyclic AMP + diphosphate. Activated by host calmodulin. Functionally, bifunctional adenylate cyclase toxin-hemolysin that plays a crucial role in host colonization. It causes whooping cough by acting on mammalian cells by elevating cAMP-concentration and thus disrupts normal cell function. In terms of biological role, adenylate cyclase that is activated by host intracellular calmodulin and catalyzes un-regulated conversion of ATP to cAMP, thereby impairing microbicidal functions of immune effector cells and inducing apoptosis of lung macrophages. Its function is as follows. Hemolysin that forms small cation-selective membrane channels, leading to hemolytic activity. The hemolytic activity of CyaA is weak compared with that of the HlyA of E.coli. The chain is Bifunctional hemolysin/adenylate cyclase (cya) from Bordetella bronchiseptica (strain ATCC BAA-588 / NCTC 13252 / RB50) (Alcaligenes bronchisepticus).